An 856-amino-acid polypeptide reads, in one-letter code: DNA mismatch repair protein MutS (856 aa).

618 to 625 lines the ATP pocket; the sequence is GPNMGGKS.

Belongs to the DNA mismatch repair MutS family.

Its function is as follows. This protein is involved in the repair of mismatches in DNA. It is possible that it carries out the mismatch recognition step. This protein has a weak ATPase activity. The sequence is that of DNA mismatch repair protein MutS from Shewanella putrefaciens (strain CN-32 / ATCC BAA-453).